Reading from the N-terminus, the 217-residue chain is MPETIENQACIVIAIAGASASGKSLIASTIYKELKEELDSNDIDIISEDAYYKDQTHLTMDEREQTNYDHPDSMVHYLLVEHLRQLKQGKPIQIPEYDYAKHNRKTSSKHFEPKKIIILEGILLLTHETIRNEINVSIFVDAPLDICFIRRLQRDLIERGRSMDSVISQCRKTVRPMFLKFIEPSKQYADIIIPKGGKNRIAIDILKAQIKQLLSKK.

17–24 provides a ligand contact to ATP; that stretch reads GASASGKS.

Belongs to the uridine kinase family.

The protein localises to the cytoplasm. The enzyme catalyses uridine + ATP = UMP + ADP + H(+). It carries out the reaction cytidine + ATP = CMP + ADP + H(+). Its pathway is pyrimidine metabolism; CTP biosynthesis via salvage pathway; CTP from cytidine: step 1/3. It participates in pyrimidine metabolism; UMP biosynthesis via salvage pathway; UMP from uridine: step 1/1. The chain is Uridine kinase from Haemophilus ducreyi (strain 35000HP / ATCC 700724).